Here is a 712-residue protein sequence, read N- to C-terminus: DNA topoisomerase 3 (712 aa).

Residues 2–135 form the Toprim domain; that stretch reads KSLIIAEKPS…TKRLWISSVT (134 aa). Positions 8 and 104 each coordinate Mg(2+). Residues 152 to 581 enclose the Topo IA-type catalytic domain; that stretch reads FNNLYHAALA…EMKAFTNQVV (430 aa). The segment at 186-191 is interaction with DNA; the sequence is SLGRVQ. Tyr-305 serves as the catalytic O-(5'-phospho-DNA)-tyrosine intermediate.

It belongs to the type IA topoisomerase family. The cofactor is Mg(2+).

It catalyses the reaction ATP-independent breakage of single-stranded DNA, followed by passage and rejoining.. In terms of biological role, releases the supercoiling and torsional tension of DNA, which is introduced during the DNA replication and transcription, by transiently cleaving and rejoining one strand of the DNA duplex. Introduces a single-strand break via transesterification at a target site in duplex DNA. The scissile phosphodiester is attacked by the catalytic tyrosine of the enzyme, resulting in the formation of a DNA-(5'-phosphotyrosyl)-enzyme intermediate and the expulsion of a 3'-OH DNA strand. The free DNA strand then undergoes passage around the unbroken strand, thus removing DNA supercoils. Finally, in the religation step, the DNA 3'-OH attacks the covalent intermediate to expel the active-site tyrosine and restore the DNA phosphodiester backbone. The protein is DNA topoisomerase 3 of Staphylococcus saprophyticus subsp. saprophyticus (strain ATCC 15305 / DSM 20229 / NCIMB 8711 / NCTC 7292 / S-41).